The chain runs to 211 residues: ATP-dependent Clp protease proteolytic subunit (211 aa).

Residue Ser114 is the Nucleophile of the active site. Residue His139 is part of the active site.

It belongs to the peptidase S14 family. In terms of assembly, fourteen ClpP subunits assemble into 2 heptameric rings which stack back to back to give a disk-like structure with a central cavity, resembling the structure of eukaryotic proteasomes.

It localises to the cytoplasm. The enzyme catalyses Hydrolysis of proteins to small peptides in the presence of ATP and magnesium. alpha-casein is the usual test substrate. In the absence of ATP, only oligopeptides shorter than five residues are hydrolyzed (such as succinyl-Leu-Tyr-|-NHMec, and Leu-Tyr-Leu-|-Tyr-Trp, in which cleavage of the -Tyr-|-Leu- and -Tyr-|-Trp bonds also occurs).. In terms of biological role, cleaves peptides in various proteins in a process that requires ATP hydrolysis. Has a chymotrypsin-like activity. Plays a major role in the degradation of misfolded proteins. The protein is ATP-dependent Clp protease proteolytic subunit of Pseudomonas fluorescens (strain ATCC BAA-477 / NRRL B-23932 / Pf-5).